The sequence spans 783 residues: BMP/retinoic acid-inducible neural-specific protein 2 (783 aa).

An N-terminal signal peptide occupies residues 1–33; it reads MRWQCGTRFRGLRPAVAPWTALLALGLPGWVLA. Positions 85–281 constitute an MACPF domain; the sequence is RYRIYREFAR…FVAAALSYIT (197 aa). N-linked (GlcNAc...) asparagine glycosylation is found at N185, N354, N473, N579, N626, and N658.

This sequence belongs to the BRINP family.

It localises to the secreted. Inhibits neuronal cell proliferation by negative regulation of the cell cycle transition. This is BMP/retinoic acid-inducible neural-specific protein 2 (BRINP2) from Homo sapiens (Human).